A 358-amino-acid polypeptide reads, in one-letter code: 3-isopropylmalate dehydrogenase (358 aa).

77–90 serves as a coordination point for NAD(+); the sequence is GPKWTNLPPDQQPE. The substrate site is built by Arg98, Arg108, Arg137, and Asp226. Mg(2+)-binding residues include Asp226, Asp250, and Asp254. 284–296 contributes to the NAD(+) binding site; the sequence is GSAPDIAGKGIAN.

It belongs to the isocitrate and isopropylmalate dehydrogenases family. LeuB type 1 subfamily. In terms of assembly, homodimer. Mg(2+) serves as cofactor. Requires Mn(2+) as cofactor.

Its subcellular location is the cytoplasm. The enzyme catalyses (2R,3S)-3-isopropylmalate + NAD(+) = 4-methyl-2-oxopentanoate + CO2 + NADH. It participates in amino-acid biosynthesis; L-leucine biosynthesis; L-leucine from 3-methyl-2-oxobutanoate: step 3/4. In terms of biological role, catalyzes the oxidation of 3-carboxy-2-hydroxy-4-methylpentanoate (3-isopropylmalate) to 3-carboxy-4-methyl-2-oxopentanoate. The product decarboxylates to 4-methyl-2 oxopentanoate. The chain is 3-isopropylmalate dehydrogenase (leuB) from Haemophilus influenzae (strain ATCC 51907 / DSM 11121 / KW20 / Rd).